A 250-amino-acid chain; its full sequence is Ribosomal RNA small subunit methyltransferase J (250 aa).

S-adenosyl-L-methionine-binding positions include 102–103, 118–119, 154–155, and Asp-172; these read RD, ER, and SS.

This sequence belongs to the methyltransferase superfamily. RsmJ family.

It localises to the cytoplasm. The catalysed reaction is guanosine(1516) in 16S rRNA + S-adenosyl-L-methionine = N(2)-methylguanosine(1516) in 16S rRNA + S-adenosyl-L-homocysteine + H(+). Functionally, specifically methylates the guanosine in position 1516 of 16S rRNA. The sequence is that of Ribosomal RNA small subunit methyltransferase J from Edwardsiella ictaluri (strain 93-146).